A 96-amino-acid chain; its full sequence is U-reduvitoxin-Pr12a (96 aa).

A signal peptide spans 1 to 20 (MKTALLLFFALVFIAFETEA). Disulfide bonds link C21–C38, C33–C53, and C36–C47. Pacifastin domains follow at residues 21 to 55 (CRPG…ICPP) and 59 to 94 (KLEC…CIHK). Positions 54–56 (PPR) are pro-Pro-Arg motif necessary for proteolytic processing. 3 cysteine pairs are disulfide-bonded: C62/C77, C72/C91, and C75/C86.

It belongs to the protease inhibitor I19 family. As to expression, expressed by the venom gland.

It is found in the secreted. Inhibits trypsin activity and prophenoloxidase (PPO) activation, an enzyme essential for both clotting and insect innate immune responses. It does not inhibit activity of chymotrypsin and protease K, and has no effect on phenoloxidase (PO) activity. This chain is U-reduvitoxin-Pr12a, found in Platymeris rhadamanthus (Red spot assassin bug).